We begin with the raw amino-acid sequence, 188 residues long: MSIKSDKWIRRMAEQHGMIEPFEPGQIRENDGRKIISYGTSSYGYDIRCAPEFKVFTNIHSTVVDPKHFDEKSFVDFHGDSCIIPPNSFALARTVEYFRIPRNVLTICLGKSTYARCGIIVNVTPFEPEWEGYVTLEFSNTTPLPARIYAGEGCAQVLFFESDEVCEVSYRDRGGKYQGQVGVTLPKA.

DCTP-binding positions include 111–116 (KSTYAR), 135–137 (TLE), Q156, Y170, and Q180. The active-site Proton donor/acceptor is E137.

Belongs to the dCTP deaminase family. As to quaternary structure, homotrimer.

The enzyme catalyses dCTP + H2O + H(+) = dUTP + NH4(+). It functions in the pathway pyrimidine metabolism; dUMP biosynthesis; dUMP from dCTP (dUTP route): step 1/2. Its function is as follows. Catalyzes the deamination of dCTP to dUTP. The protein is dCTP deaminase of Paracidovorax citrulli (strain AAC00-1) (Acidovorax citrulli).